The following is a 770-amino-acid chain: 1,4-alpha-glucan branching enzyme GlgB (770 aa).

The Nucleophile role is filled by Asp-433. The active-site Proton donor is the Glu-486.

The protein belongs to the glycosyl hydrolase 13 family. GlgB subfamily. In terms of assembly, monomer.

The enzyme catalyses Transfers a segment of a (1-&gt;4)-alpha-D-glucan chain to a primary hydroxy group in a similar glucan chain.. It functions in the pathway glycan biosynthesis; glycogen biosynthesis. Catalyzes the formation of the alpha-1,6-glucosidic linkages in glycogen by scission of a 1,4-alpha-linked oligosaccharide from growing alpha-1,4-glucan chains and the subsequent attachment of the oligosaccharide to the alpha-1,6 position. In Synechocystis sp. (strain ATCC 27184 / PCC 6803 / Kazusa), this protein is 1,4-alpha-glucan branching enzyme GlgB (glgB).